Reading from the N-terminus, the 227-residue chain is Ornithine decarboxylase antizyme 1 (227 aa).

The disordered stretch occupies residues 20 to 50 (EGDKPSATVHATRTMPLLSLHSRGGRSSESS). Residues 36-50 (LLSLHSRGGRSSESS) show a composition bias toward low complexity.

It belongs to the ODC antizyme family. As to quaternary structure, interacts with ODC1 and thereby sterically blocks ODC homodimerization. Forms a ternary complex with PSMB4 and OAZ1 before PSMB4 is incorporated into the 20S proteasome. Interacts with AZIN2; this interaction disrupts the interaction between the antizyme and ODC1. Interacts with FAM171A1.

Ornithine decarboxylase (ODC) antizyme protein that negatively regulates ODC activity and intracellular polyamine biosynthesis and uptake in response to increased intracellular polyamine levels. Binds to ODC monomers, inhibiting the assembly of the functional ODC homodimer, and targets the monomers for ubiquitin-independent proteolytic destruction by the 26S proteasome. Triggers ODC degradation by inducing the exposure of a cryptic proteasome-interacting surface of ODC. Stabilizes AZIN2 by interfering with its ubiquitination. Also inhibits cellular uptake of polyamines by inactivating the polyamine uptake transporter. SMAD1/OAZ1/PSMB4 complex mediates the degradation of the CREBBP/EP300 repressor SNIP1. Involved in the translocation of AZIN2 from ER-Golgi intermediate compartment (ERGIC) to the cytosol. The polypeptide is Ornithine decarboxylase antizyme 1 (OAZ1) (Bos taurus (Bovine)).